A 37-amino-acid chain; its full sequence is Large ribosomal subunit protein bL36 (37 aa).

It belongs to the bacterial ribosomal protein bL36 family.

The sequence is that of Large ribosomal subunit protein bL36 from Thermus thermophilus (strain ATCC BAA-163 / DSM 7039 / HB27).